A 109-amino-acid polypeptide reads, in one-letter code: Thiosulfate sulfurtransferase GlpE (109 aa).

The 89-residue stretch at 16 to 104 (REQGAVVVDI…WRTTYPAEIS (89 aa)) folds into the Rhodanese domain. C64 (cysteine persulfide intermediate) is an active-site residue.

The protein belongs to the GlpE family.

The protein localises to the cytoplasm. The catalysed reaction is thiosulfate + hydrogen cyanide = thiocyanate + sulfite + 2 H(+). It carries out the reaction thiosulfate + [thioredoxin]-dithiol = [thioredoxin]-disulfide + hydrogen sulfide + sulfite + 2 H(+). Its function is as follows. Transferase that catalyzes the transfer of sulfur from thiosulfate to thiophilic acceptors such as cyanide or dithiols. May function in a CysM-independent thiosulfate assimilation pathway by catalyzing the conversion of thiosulfate to sulfite, which can then be used for L-cysteine biosynthesis. The protein is Thiosulfate sulfurtransferase GlpE of Pseudomonas fluorescens (strain SBW25).